We begin with the raw amino-acid sequence, 44 residues long: uncharacterized protein (44 aa).

Residues 6–26 form a helical membrane-spanning segment; the sequence is SILIRGGGGVLIVLILLLWIV.

Its subcellular location is the membrane. This is an uncharacterized protein from Ornithodoros (relapsing fever ticks).